The chain runs to 96 residues: Protein RSI-1 (96 aa).

Residues 1-29 (MAKSGYNASFLLLISMFLILLTFSNVVEG) form the signal peptide.

Belongs to the GASA family. Post-translationally, six disulfide bonds may be present. Expressed very early in lateral root development.

The protein resides in the secreted. The polypeptide is Protein RSI-1 (RSI-1) (Solanum lycopersicum (Tomato)).